The primary structure comprises 1035 residues: Sialidase A (1035 aa).

The first 53 residues, 1 to 53, serve as a signal peptide directing secretion; the sequence is MSYFRNRDIDIERNSMNRSVQERKCRYSIRKLSVGAVSMIVGAVVFGTSPVLA. The segment at 57–112 is disordered; that stretch reads ASEQPLANETQLSGESSTLTDTEKSQPSSETELSGNKQEQERKDKQEEKIPRDYYA. A compositionally biased stretch (polar residues) spans 61 to 92; the sequence is PLANETQLSGESSTLTDTEKSQPSSETELSGN. Residues 94-112 are compositionally biased toward basic and acidic residues; that stretch reads QEQERKDKQEEKIPRDYYA. Arg-347 lines the substrate pocket. Catalysis depends on Asp-372, which acts as the Proton acceptor. BNR repeat units follow at residues 381 to 392, 539 to 550, and 607 to 618; these read RRSEDNGKTWGD, SYSDDDGKTWSA, and IYSDDHGKTWHA. Glu-647 is an active-site residue. Arg-663 lines the substrate pocket. A BNR 4 repeat occupies 672–683; that stretch reads ATSKDGGVTWEK. Positions 902–951 are disordered; it reads GPLGTSGEEPAPTVEKPEYTGPLGTSGEEPAPTVEKPEYTGPLGTAGEEA. The short motif at 1003–1007 is the LPXTG sorting signal element; sequence LPETG. At Thr-1006 the chain carries Pentaglycyl murein peptidoglycan amidated threonine. A propeptide spans 1007-1035 (removed by sortase); that stretch reads GNKESDLLASLGLTAFFLGLFTLGKKREQ.

Belongs to the glycosyl hydrolase 33 family.

It is found in the secreted. The protein localises to the cell wall. The enzyme catalyses Hydrolysis of alpha-(2-&gt;3)-, alpha-(2-&gt;6)-, alpha-(2-&gt;8)- glycosidic linkages of terminal sialic acid residues in oligosaccharides, glycoproteins, glycolipids, colominic acid and synthetic substrates.. The sequence is that of Sialidase A (nanA) from Streptococcus pneumoniae.